Consider the following 198-residue polypeptide: Cyclotides mra4/mra5 (198 aa).

Residues 1 to 22 form the signal peptide; that stretch reads MESNKMVVGVLLIAAFALPALA. Residues 23–79 constitute a propeptide that is removed on maturation; that stretch reads LFERDVITHETIEAVLKKSTPNSNTMLQEDAINALTGKTLISQTILEETLLKNGVVG. Intrachain disulfides connect cysteine 84-cysteine 100, cysteine 88-cysteine 102, and cysteine 93-cysteine 107. Positions 111 to 163 are excised as a propeptide; that stretch reads SLALPTLEKDVITPEALEAVLKSNGGAIVNTKTIISNAIFEETLLNNANHVLG. 3 disulfide bridges follow: cysteine 167-cysteine 183, cysteine 171-cysteine 185, and cysteine 176-cysteine 190. Residues 194–198 constitute a propeptide that is removed on maturation; it reads SLALN.

It belongs to the cyclotide family. Bracelet subfamily. These are cyclic peptides. Post-translationally, the mature peptides contain 3 disulfide bonds each.

Its function is as follows. Probably participates in a plant defense mechanism. This is Cyclotides mra4/mra5 from Melicytus ramiflorus (Whitey wood).